The primary structure comprises 79 residues: UPF0291 protein BH2353 (79 aa).

The tract at residues 57 to 79 (GAGNDVTPDKLKQSKNKYRNDIH) is disordered. Residues 63-79 (TPDKLKQSKNKYRNDIH) show a composition bias toward basic and acidic residues.

It belongs to the UPF0291 family.

The protein resides in the cytoplasm. This Halalkalibacterium halodurans (strain ATCC BAA-125 / DSM 18197 / FERM 7344 / JCM 9153 / C-125) (Bacillus halodurans) protein is UPF0291 protein BH2353.